Here is a 187-residue protein sequence, read N- to C-terminus: Peptidyl-tRNA hydrolase (187 aa).

Tyr-14 is a binding site for tRNA. Residue His-19 is the Proton acceptor of the active site. TRNA-binding residues include Tyr-64, Asn-66, and Asn-112.

Belongs to the PTH family. Monomer.

It localises to the cytoplasm. The enzyme catalyses an N-acyl-L-alpha-aminoacyl-tRNA + H2O = an N-acyl-L-amino acid + a tRNA + H(+). Functionally, hydrolyzes ribosome-free peptidyl-tRNAs (with 1 or more amino acids incorporated), which drop off the ribosome during protein synthesis, or as a result of ribosome stalling. In terms of biological role, catalyzes the release of premature peptidyl moieties from peptidyl-tRNA molecules trapped in stalled 50S ribosomal subunits, and thus maintains levels of free tRNAs and 50S ribosomes. The protein is Peptidyl-tRNA hydrolase of Bdellovibrio bacteriovorus (strain ATCC 15356 / DSM 50701 / NCIMB 9529 / HD100).